We begin with the raw amino-acid sequence, 173 residues long: Co-chaperone protein HscB homolog (173 aa).

One can recognise a J domain in the interval 5–77; sequence CHYALFDLQP…PRRARYLLAI (73 aa).

Belongs to the HscB family. In terms of assembly, interacts with HscA and stimulates its ATPase activity.

Co-chaperone involved in the maturation of iron-sulfur cluster-containing proteins. Seems to help targeting proteins to be folded toward HscA. In Pseudomonas putida (strain GB-1), this protein is Co-chaperone protein HscB homolog.